The chain runs to 554 residues: CTP synthase (554 aa).

An amidoligase domain region spans residues 1–279; sequence MSQPRAEHVT…DAFLIRRLDL (279 aa). Position 21 (Ser21) interacts with CTP. Ser21 is a UTP binding site. ATP-binding positions include 22–27 and Asp79; that span reads SLGKGL. Mg(2+)-binding residues include Asp79 and Glu153. CTP is bound by residues 160–162, 200–205, and Lys236; these read DIE and KTKPTQ. UTP is bound by residues 200 to 205 and Lys236; that span reads KTKPTQ. Residues 304–551 form the Glutamine amidotransferase type-1 domain; it reads TVALVGKYID…VKAGLKHKND (248 aa). Gly367 lines the L-glutamine pocket. Residue Cys394 is the Nucleophile; for glutamine hydrolysis of the active site. L-glutamine contacts are provided by residues 395–398, Glu417, and Arg478; that span reads LGLQ. Residues His524 and Glu526 contribute to the active site.

The protein belongs to the CTP synthase family. In terms of assembly, homotetramer.

The catalysed reaction is UTP + L-glutamine + ATP + H2O = CTP + L-glutamate + ADP + phosphate + 2 H(+). It carries out the reaction L-glutamine + H2O = L-glutamate + NH4(+). It catalyses the reaction UTP + NH4(+) + ATP = CTP + ADP + phosphate + 2 H(+). It participates in pyrimidine metabolism; CTP biosynthesis via de novo pathway; CTP from UDP: step 2/2. With respect to regulation, allosterically activated by GTP, when glutamine is the substrate; GTP has no effect on the reaction when ammonia is the substrate. The allosteric effector GTP functions by stabilizing the protein conformation that binds the tetrahedral intermediate(s) formed during glutamine hydrolysis. Inhibited by the product CTP, via allosteric rather than competitive inhibition. Its function is as follows. Catalyzes the ATP-dependent amination of UTP to CTP with either L-glutamine or ammonia as the source of nitrogen. Regulates intracellular CTP levels through interactions with the four ribonucleotide triphosphates. This Corynebacterium kroppenstedtii (strain DSM 44385 / JCM 11950 / CIP 105744 / CCUG 35717) protein is CTP synthase.